The primary structure comprises 636 residues: Threonine--tRNA ligase (636 aa).

One can recognise a TGS domain in the interval methionine 1–threonine 61. The catalytic stretch occupies residues aspartate 242–proline 533. Zn(2+)-binding residues include cysteine 333, histidine 384, and histidine 510.

It belongs to the class-II aminoacyl-tRNA synthetase family. As to quaternary structure, homodimer. Zn(2+) is required as a cofactor.

The protein resides in the cytoplasm. The catalysed reaction is tRNA(Thr) + L-threonine + ATP = L-threonyl-tRNA(Thr) + AMP + diphosphate + H(+). Functionally, catalyzes the attachment of threonine to tRNA(Thr) in a two-step reaction: L-threonine is first activated by ATP to form Thr-AMP and then transferred to the acceptor end of tRNA(Thr). Also edits incorrectly charged L-seryl-tRNA(Thr). This chain is Threonine--tRNA ligase, found in Saccharophagus degradans (strain 2-40 / ATCC 43961 / DSM 17024).